The sequence spans 266 residues: Protein crossbronx-like (266 aa).

The 164-residue stretch at 15 to 178 (KQGYKILAEY…IQELAISSRR (164 aa)) folds into the UBC core domain. Residues 216–266 (EATCEDDSPPAELLGHIDSSRQLDEDEANQRGKLQAATTDLQHGARCSVAQ) form a disordered region.

The protein belongs to the ubiquitin-conjugating enzyme family. FTS subfamily.

The polypeptide is Protein crossbronx-like (Drosophila ananassae (Fruit fly)).